Reading from the N-terminus, the 149-residue chain is Glutamate mutase sigma subunit (149 aa).

In terms of domain architecture, B12-binding spans 5 to 138 (DPTVVLGTIG…DAVKTELDVD (134 aa)). Adenosylcob(III)alamin contacts are provided by residues 15–19 (SDAHA), His-18, 63–65 (SSL), and 94–98 (NLAVG).

This sequence belongs to the methylaspartate mutase GlmS subunit family. Heterotetramer composed of 2 epsilon subunits (GlmE) and 2 sigma subunits (GlmS). GlmE exists as a homodimer and GlmS as a monomer. Requires adenosylcob(III)alamin as cofactor.

The enzyme catalyses (2S,3S)-3-methyl-L-aspartate = L-glutamate. Its pathway is amino-acid degradation; L-glutamate degradation via mesaconate pathway; acetate and pyruvate from L-glutamate: step 1/4. Its function is as follows. Catalyzes the carbon skeleton rearrangement of L-glutamate to L-threo-3-methylaspartate ((2S,3S)-3-methylaspartate). This chain is Glutamate mutase sigma subunit, found in Halobacterium salinarum (strain ATCC 700922 / JCM 11081 / NRC-1) (Halobacterium halobium).